The following is a 168-amino-acid chain: Plastocyanin, chloroplastic (168 aa).

The transit peptide at 1 to 70 (MASVAAAAVS…SSLLLVASAN (70 aa)) directs the protein to the chloroplast. In terms of domain architecture, Plastocyanin-like spans 71 to 168 (AATVKMGGDD…AGMKGVVTVS (98 aa)). Cu cation is bound by residues histidine 108, cysteine 153, histidine 156, and methionine 161.

The protein belongs to the plastocyanin family. It depends on Cu(2+) as a cofactor.

It localises to the plastid. It is found in the chloroplast thylakoid membrane. In terms of biological role, participates in electron transfer between P700 and the cytochrome b6-f complex in photosystem I. The sequence is that of Plastocyanin, chloroplastic (PETE) from Physcomitrium patens (Spreading-leaved earth moss).